A 116-amino-acid polypeptide reads, in one-letter code: Cysteine proteinase inhibitor 1 (116 aa).

Residues 1 to 22 (MVPKPLSLLLLLLLALSAAVVG) form the signal peptide. The Cystatin domain occupies 30–89 (GGWRPIENLNSAEVQDVAQFAVSEHNKQANDELQYQSVVRGYTQVVAGTNYRLVIAAKDG). Positions 73-77 (QVVAG) match the Secondary area of contact motif. An N-linked (GlcNAc...) asparagine glycan is attached at N109.

It belongs to the cystatin family. Phytocystatin subfamily.

It localises to the secreted. Its function is as follows. Specific inhibitor of papain family cysteine proteinases. This chain is Cysteine proteinase inhibitor 1, found in Actinidia chinensis var. chinensis (Chinese soft-hair kiwi).